Here is a 299-residue protein sequence, read N- to C-terminus: Aspartate carbamoyltransferase catalytic subunit (299 aa).

Positions 51 and 52 each coordinate carbamoyl phosphate. K79 is a binding site for L-aspartate. Carbamoyl phosphate contacts are provided by R101, H130, and Q133. Positions 163 and 215 each coordinate L-aspartate. Positions 256 and 257 each coordinate carbamoyl phosphate.

It belongs to the aspartate/ornithine carbamoyltransferase superfamily. ATCase family. As to quaternary structure, heterododecamer (2C3:3R2) of six catalytic PyrB chains organized as two trimers (C3), and six regulatory PyrI chains organized as three dimers (R2).

It carries out the reaction carbamoyl phosphate + L-aspartate = N-carbamoyl-L-aspartate + phosphate + H(+). Its pathway is pyrimidine metabolism; UMP biosynthesis via de novo pathway; (S)-dihydroorotate from bicarbonate: step 2/3. Functionally, catalyzes the condensation of carbamoyl phosphate and aspartate to form carbamoyl aspartate and inorganic phosphate, the committed step in the de novo pyrimidine nucleotide biosynthesis pathway. The chain is Aspartate carbamoyltransferase catalytic subunit from Ehrlichia chaffeensis (strain ATCC CRL-10679 / Arkansas).